We begin with the raw amino-acid sequence, 424 residues long: L-rhamnose isomerase (424 aa).

Mn(2+) contacts are provided by histidine 261, aspartate 293, and aspartate 295.

It belongs to the rhamnose isomerase family. It depends on Mn(2+) as a cofactor.

Its subcellular location is the cytoplasm. It catalyses the reaction L-rhamnopyranose = L-rhamnulose. Its pathway is carbohydrate degradation; L-rhamnose degradation; glycerone phosphate from L-rhamnose: step 1/3. In terms of biological role, catalyzes the interconversion of L-rhamnose and L-rhamnulose. The chain is L-rhamnose isomerase from Bacillus subtilis (strain 168).